The sequence spans 166 residues: Ribonuclease H (166 aa).

The RNase H type-1 domain occupies 5 to 147; that stretch reads PRKRVALFTD…VDREARRQAQ (143 aa). Mg(2+) is bound by residues Asp-14, Glu-52, Asp-74, and Asp-139. Residues 128–166 form a disordered region; sequence GHTGHPENERVDREARRQAQSQAKTPCPPRAPTLFHEEA. The span at 131–144 shows a compositional bias: basic and acidic residues; it reads GHPENERVDREARR.

It belongs to the RNase H family. In terms of assembly, monomer. Mg(2+) serves as cofactor.

The catalysed reaction is Endonucleolytic cleavage to 5'-phosphomonoester.. Its function is as follows. Endonuclease that specifically degrades the RNA of RNA-DNA hybrids. The chain is Ribonuclease H (rnhA) from Thermus thermophilus (strain ATCC 27634 / DSM 579 / HB8).